The chain runs to 193 residues: MNTYKNSLNHFLNLVDCLEKIPNVGKKSAFKIAYHLGLENPYLALKITHALENALENLKTCTSCNALSESEVCEICSDESRQNSQLCMVLHPRDVFILEDLKDFLGRYYVLNSIEEVDFNALEKRLIEENIKEIIFAFPPTLANDSLMLYIEDKLQHFHLTFTKIAQGVPTGVNFENIDSVSLSRAFNSRIKA.

A C4-type zinc finger spans residues 61-76 (CTSCNALSESEVCEIC). The 87-residue stretch at 84–170 (SQLCMVLHPR…TFTKIAQGVP (87 aa)) folds into the Toprim domain.

It belongs to the RecR family.

In terms of biological role, may play a role in DNA repair. It seems to be involved in an RecBC-independent recombinational process of DNA repair. It may act with RecF and RecO. This is Recombination protein RecR from Helicobacter pylori (strain HPAG1).